The primary structure comprises 342 residues: Phosphoribosylformylglycinamidine cyclo-ligase (342 aa).

It belongs to the AIR synthase family.

The protein resides in the cytoplasm. It carries out the reaction 2-formamido-N(1)-(5-O-phospho-beta-D-ribosyl)acetamidine + ATP = 5-amino-1-(5-phospho-beta-D-ribosyl)imidazole + ADP + phosphate + H(+). Its pathway is purine metabolism; IMP biosynthesis via de novo pathway; 5-amino-1-(5-phospho-D-ribosyl)imidazole from N(2)-formyl-N(1)-(5-phospho-D-ribosyl)glycinamide: step 2/2. This chain is Phosphoribosylformylglycinamidine cyclo-ligase, found in Latilactobacillus sakei subsp. sakei (strain 23K) (Lactobacillus sakei subsp. sakei).